Reading from the N-terminus, the 458-residue chain is Transmembrane protein 135 (458 aa).

The next 6 helical transmembrane spans lie at 68–88 (ILQSASFLTANGALYITFFCI), 96–116 (FYSWTPGFGAALPASYVAILI), 149–169 (TLRNGEVLLFCITAAMYMFFF), 298–318 (FQLGAFLGSFVSIYKGTSCFL), 331–351 (IVAGFLAGVSMMFYKSTTISM), and 377–397 (ADTIIYSISTAICFHAAVMEV).

It belongs to the TMEM135 family.

Its subcellular location is the mitochondrion membrane. The protein resides in the peroxisome membrane. In terms of biological role, involved in mitochondrial metabolism by regulating the balance between mitochondrial fusion and fission. May act as a regulator of mitochondrial fission that promotes DNM1L-dependent fission through activation of DNM1L. May be involved in peroxisome organization. This chain is Transmembrane protein 135, found in Mus musculus (Mouse).